The following is a 466-amino-acid chain: Cysteine--tRNA ligase (466 aa).

Zn(2+) is bound at residue C29. Positions 31 to 41 match the 'HIGH' region motif; it reads PTVYDFAHIGN. Residues C210, H235, and E239 each coordinate Zn(2+). Positions 267-271 match the 'KMSKS' region motif; sequence KMSKS. Position 270 (K270) interacts with ATP.

It belongs to the class-I aminoacyl-tRNA synthetase family. In terms of assembly, monomer. The cofactor is Zn(2+).

It localises to the cytoplasm. The enzyme catalyses tRNA(Cys) + L-cysteine + ATP = L-cysteinyl-tRNA(Cys) + AMP + diphosphate. The polypeptide is Cysteine--tRNA ligase (Solibacter usitatus (strain Ellin6076)).